The following is a 687-amino-acid chain: Putative lipase YDR444W (687 aa).

The active-site Charge relay system is the serine 284. Disordered regions lie at residues 429–472 (IRKK…AESP), 491–513 (KINK…EQGV), and 650–687 (ELAE…ENAT). A compositionally biased stretch (low complexity) spans 436–463 (SPTSSEFVSSDSPESSGASSPSNENGNN). The segment covering 670-681 (RSNEYNEGEISK) has biased composition (basic and acidic residues).

The protein belongs to the putative lipase ROG1 family.

Its subcellular location is the cytoplasm. The chain is Putative lipase YDR444W from Saccharomyces cerevisiae (strain ATCC 204508 / S288c) (Baker's yeast).